A 180-amino-acid polypeptide reads, in one-letter code: Flavodoxin 2 (180 aa).

The Flavodoxin-like domain occupies 4–173 (IGLFFGSNTG…RVAAWLAQIA (170 aa)). Residues 10 to 15 (SNTGKT), Thr-57, Gly-61, Asp-99, 106 to 108 (NYL), and Asp-155 each bind FMN.

The cofactor is FMN.

Flavodoxins are low-potential electron donors to a number of redox enzymes. NifF is the electron donor to nitrogenase, and is thus implicated in nitrogen fixation. Does not function as an electron donor to nitrite reductase. In Azotobacter vinelandii, this protein is Flavodoxin 2.